The following is a 359-amino-acid chain: UPF0283 membrane protein Rleg2_1967 (359 aa).

The interval 1-43 (MSKPPSDPPRRPPAAFTYEDEATERHDNGRQAERRRKPESFSE) is disordered. Positions 23-40 (TERHDNGRQAERRRKPES) are enriched in basic and acidic residues. A run of 2 helical transmembrane segments spans residues 77–97 (FGKI…GLWT) and 111–131 (LGYL…ALVI).

Belongs to the UPF0283 family.

Its subcellular location is the cell inner membrane. The polypeptide is UPF0283 membrane protein Rleg2_1967 (Rhizobium leguminosarum bv. trifolii (strain WSM2304)).